The following is a 724-amino-acid chain: MLRAASSIRAVANRGLATAAVARPGVPLDEREGKEIYTTVGIDYNEPKFDKILIANRGEIACRVIKTARAMGIKTVAVHSDVDSNSLHVKMADEAVCVGEAPTAKSYLRADRILQAVEDTGAQAVHPGYGFLSENTKFAAELEKAGAKFIGPNSKAILDMGDKIHSKKIATAARVSMIPGYDGEIADEDMCVKVSRDIGYPVMIKASAGGGGKGMRVAWNDKQAREGYRLSKQEAASSFGDDRMLVEKFIDNPRHIEMQVLCDKHGNALWLNERECSIQRRNQKVIEEAPSSFVPPEMRRKMGEQAVQLAKAVGYDSAGTVEFLVDSQRNFYFLEMNTRLQVEHPITECITGIDIVQQMLRVSYGHPLPITQEQVPLNGWAFESRVYAEDPYKGFGLPSVGRLSRYVEPKHVDGVRCDSGIREGSEISIYYDPLICKLVTHGDNREQALNRMQEALDNYVIRGVTHNIPLLRDIVQEKRFRTGDITTKYLPEVYPEGFQGTSLSPKEQDVVIAFASALNARKLARANQFLNQNKQRSTHVASFSKTYKFVSSLPVKEGERPTEHAVEVEFVEGSANKAQVRIGGKTVTISGDLNLSHPVNSIEVDGEHITTQIVGKRAGEITVLYKGTPFKVKVLPEQAVKYLQYMKEKAKVDLSTVVLSPMPGAIKNVNVKPGDMVSEGQELVVMEAMKMQNSLHAGKTGRVKAVNVKVGATVDEGEVLVELE.

A Biotin carboxylation domain is found at 48–495; it reads KFDKILIANR…TTKYLPEVYP (448 aa). ATP-binding positions include Lys163, 195–256, Glu247, and Asn282; that span reads SRDI…PRHI. The 198-residue stretch at 167–364 folds into the ATP-grasp domain; the sequence is KKIATAARVS…IVQQMLRVSY (198 aa). Mg(2+) is bound by residues Glu322, Glu335, and Asn337. Glu322, Glu335, and Asn337 together coordinate Mn(2+). The active site involves Arg339. Phe395 is a biotin binding site. In terms of domain architecture, Biotinyl-binding spans 649–724; it reads KAKVDLSTVV…DEGEVLVELE (76 aa). N6-biotinyllysine is present on Lys690.

In terms of assembly, the holoenzyme is a dodecamer composed of 6 alpha subunits and 6 beta subunits. Interacts with sir-2.2 and sir-2.3. It depends on biotin as a cofactor. Mg(2+) serves as cofactor. Requires Mn(2+) as cofactor. In terms of processing, the biotin cofactor is covalently attached to the C-terminal biotinyl-binding domain and is required for the catalytic activity.

The protein resides in the mitochondrion matrix. The catalysed reaction is propanoyl-CoA + hydrogencarbonate + ATP = (S)-methylmalonyl-CoA + ADP + phosphate + H(+). The enzyme catalyses butanoyl-CoA + hydrogencarbonate + ATP = (2S)-ethylmalonyl-CoA + ADP + phosphate + H(+). It participates in metabolic intermediate metabolism; propanoyl-CoA degradation; succinyl-CoA from propanoyl-CoA: step 1/3. Its function is as follows. This is one of the 2 subunits of the biotin-dependent propionyl-CoA carboxylase (PCC), a mitochondrial enzyme involved in the catabolism of odd chain fatty acids, branched-chain amino acids isoleucine, threonine, methionine, and valine and other metabolites. Propionyl-CoA carboxylase catalyzes the carboxylation of propionyl-CoA/propanoyl-CoA to D-methylmalonyl-CoA/(S)-methylmalonyl-CoA. Within the holoenzyme, the alpha subunit catalyzes the ATP-dependent carboxylation of the biotin carried by the biotin carboxyl carrier (BCC) domain, while the beta subunit then transfers the carboxyl group from carboxylated biotin to propionyl-CoA. Propionyl-CoA carboxylase also significantly acts on butyryl-CoA/butanoyl-CoA, which is converted to ethylmalonyl-CoA/(2S)-ethylmalonyl-CoA. Other alternative minor substrates include (2E)-butenoyl-CoA/crotonoyl-CoA. This is Propionyl-CoA carboxylase alpha chain, mitochondrial (pcca-1) from Caenorhabditis elegans.